The primary structure comprises 380 residues: Cytochrome b (380 aa).

4 helical membrane passes run 34 to 54 (FGSL…FLAM), 78 to 99 (WLLR…YCHI), 114 to 134 (WNVG…GYVL), and 179 to 199 (FFAF…IDLV). Heme b-binding residues include H84 and H98. Position 183 (H183) interacts with heme b. H202 lines the a ubiquinone pocket. Transmembrane regions (helical) follow at residues 227-247 (TKDT…ALLF), 289-309 (LGGV…PLLN), 321-341 (LSQA…WIGS), and 348-369 (FVLI…GFPL).

Belongs to the cytochrome b family. The main subunits of complex b-c1 are: cytochrome b, cytochrome c1 and the Rieske protein. Heme b is required as a cofactor.

Its subcellular location is the mitochondrion inner membrane. In terms of biological role, component of the ubiquinol-cytochrome c reductase complex (complex III or cytochrome b-c1 complex) that is part of the mitochondrial respiratory chain. The b-c1 complex mediates electron transfer from ubiquinol to cytochrome c. Contributes to the generation of a proton gradient across the mitochondrial membrane that is then used for ATP synthesis. This is Cytochrome b (MT-CYB) from Paracentrotus lividus (Common sea urchin).